The following is a 119-amino-acid chain: uncharacterized protein (119 aa).

The next 2 helical transmembrane spans lie at 7-27 (ILHN…LLLV) and 32-52 (YFFE…FLML).

The protein localises to the membrane. This is an uncharacterized protein from Saccharomyces cerevisiae (strain ATCC 204508 / S288c) (Baker's yeast).